We begin with the raw amino-acid sequence, 326 residues long: Lipoyl synthase (326 aa).

Cysteine 68, cysteine 73, cysteine 79, cysteine 94, cysteine 98, cysteine 101, and serine 308 together coordinate [4Fe-4S] cluster. Positions 80–297 (FNHGTATFMI…KDVAMGLGFS (218 aa)) constitute a Radical SAM core domain.

It belongs to the radical SAM superfamily. Lipoyl synthase family. The cofactor is [4Fe-4S] cluster.

It is found in the cytoplasm. It carries out the reaction [[Fe-S] cluster scaffold protein carrying a second [4Fe-4S](2+) cluster] + N(6)-octanoyl-L-lysyl-[protein] + 2 oxidized [2Fe-2S]-[ferredoxin] + 2 S-adenosyl-L-methionine + 4 H(+) = [[Fe-S] cluster scaffold protein] + N(6)-[(R)-dihydrolipoyl]-L-lysyl-[protein] + 4 Fe(3+) + 2 hydrogen sulfide + 2 5'-deoxyadenosine + 2 L-methionine + 2 reduced [2Fe-2S]-[ferredoxin]. Its pathway is protein modification; protein lipoylation via endogenous pathway; protein N(6)-(lipoyl)lysine from octanoyl-[acyl-carrier-protein]: step 2/2. Functionally, catalyzes the radical-mediated insertion of two sulfur atoms into the C-6 and C-8 positions of the octanoyl moiety bound to the lipoyl domains of lipoate-dependent enzymes, thereby converting the octanoylated domains into lipoylated derivatives. This Aeromonas salmonicida (strain A449) protein is Lipoyl synthase.